The sequence spans 76 residues: Conotoxin Vc6.6 (76 aa).

The signal sequence occupies residues 1-22 (MKLTCMVIVAVLFLTANTFVTA). The propeptide occupies 23–52 (VPHSSNALENLYLKAHHEMNNPKDSELNKR). Disulfide bonds link cysteine 53–cysteine 67, cysteine 60–cysteine 71, and cysteine 66–cysteine 75.

It belongs to the conotoxin O1 superfamily. In terms of tissue distribution, expressed by the venom duct.

The protein localises to the secreted. The polypeptide is Conotoxin Vc6.6 (Conus victoriae (Queen Victoria cone)).